The sequence spans 129 residues: uncharacterized protein (129 aa).

This is an uncharacterized protein from Invertebrate iridescent virus 6 (IIV-6).